A 521-amino-acid chain; its full sequence is Solute carrier family 35 member F4 (521 aa).

A run of 10 helical transmembrane segments spans residues 160 to 180, 192 to 212, 248 to 266, 277 to 297, 301 to 321, 330 to 350, 365 to 385, 395 to 417, 419 to 441, and 450 to 470; these read MVLK…SWVG, FYCP…FFPV, FLKR…NYLY, DVSA…WIVL, FMGV…MMAY, IIGV…KVLF, FVST…VILY, FAAL…NILV, VGVV…PGNA, and VIFN…FLLM. The EamA domain maps to 261 to 321; sequence LTNYLYLLAL…AITGIVMMAY (61 aa).

The protein belongs to the SLC35F solute transporter family.

The protein localises to the membrane. Putative solute transporter. In Homo sapiens (Human), this protein is Solute carrier family 35 member F4 (SLC35F4).